Here is a 285-residue protein sequence, read N- to C-terminus: Release factor glutamine methyltransferase (285 aa).

2 residues coordinate S-adenosyl-L-methionine: aspartate 143 and asparagine 189. Position 189–192 (189–192) interacts with substrate; sequence NPPY.

This sequence belongs to the protein N5-glutamine methyltransferase family. PrmC subfamily.

The enzyme catalyses L-glutaminyl-[peptide chain release factor] + S-adenosyl-L-methionine = N(5)-methyl-L-glutaminyl-[peptide chain release factor] + S-adenosyl-L-homocysteine + H(+). In terms of biological role, methylates the class 1 translation termination release factors RF1/PrfA and RF2/PrfB on the glutamine residue of the universally conserved GGQ motif. The polypeptide is Release factor glutamine methyltransferase (Clostridium acetobutylicum (strain ATCC 824 / DSM 792 / JCM 1419 / IAM 19013 / LMG 5710 / NBRC 13948 / NRRL B-527 / VKM B-1787 / 2291 / W)).